A 298-amino-acid polypeptide reads, in one-letter code: Acetaldehyde dehydrogenase (298 aa).

6–9 (SGNI) lines the NAD(+) pocket. The active-site Acyl-thioester intermediate is Cys121. Residues 152 to 160 (SAGPGTRAN) and Asn271 each bind NAD(+).

It belongs to the acetaldehyde dehydrogenase family.

The enzyme catalyses acetaldehyde + NAD(+) + CoA = acetyl-CoA + NADH + H(+). In Mycobacterium avium (strain 104), this protein is Acetaldehyde dehydrogenase.